Here is a 199-residue protein sequence, read N- to C-terminus: Prolactin-1 (199 aa).

Disulfide bonds link Cys4-Cys11, Cys58-Cys174, and Cys191-Cys199. N-linked (GlcNAc...) asparagine glycosylation is present at Asn60.

This sequence belongs to the somatotropin/prolactin family. In terms of processing, glycosylated.

The protein localises to the secreted. The sequence is that of Prolactin-1 from Crocodylus novaeguineae (Crocodile).